A 613-amino-acid chain; its full sequence is Dihydroxy-acid dehydratase (613 aa).

Position 81 (Asp-81) interacts with Mg(2+). Cys-122 is a [2Fe-2S] cluster binding site. Mg(2+) contacts are provided by Asp-123 and Lys-124. At Lys-124 the chain carries N6-carboxylysine. Position 195 (Cys-195) interacts with [2Fe-2S] cluster. Glu-491 is a binding site for Mg(2+). Catalysis depends on Ser-517, which acts as the Proton acceptor.

It belongs to the IlvD/Edd family. Homodimer. The cofactor is [2Fe-2S] cluster. It depends on Mg(2+) as a cofactor.

It catalyses the reaction (2R)-2,3-dihydroxy-3-methylbutanoate = 3-methyl-2-oxobutanoate + H2O. The enzyme catalyses (2R,3R)-2,3-dihydroxy-3-methylpentanoate = (S)-3-methyl-2-oxopentanoate + H2O. The protein operates within amino-acid biosynthesis; L-isoleucine biosynthesis; L-isoleucine from 2-oxobutanoate: step 3/4. It participates in amino-acid biosynthesis; L-valine biosynthesis; L-valine from pyruvate: step 3/4. Its function is as follows. Functions in the biosynthesis of branched-chain amino acids. Catalyzes the dehydration of (2R,3R)-2,3-dihydroxy-3-methylpentanoate (2,3-dihydroxy-3-methylvalerate) into 2-oxo-3-methylpentanoate (2-oxo-3-methylvalerate) and of (2R)-2,3-dihydroxy-3-methylbutanoate (2,3-dihydroxyisovalerate) into 2-oxo-3-methylbutanoate (2-oxoisovalerate), the penultimate precursor to L-isoleucine and L-valine, respectively. The sequence is that of Dihydroxy-acid dehydratase from Vibrio parahaemolyticus serotype O3:K6 (strain RIMD 2210633).